A 120-amino-acid chain; its full sequence is Succinate dehydrogenase membrane anchor subunit (120 aa).

The Mitochondrial matrix segment spans residues 1–17 (MTEKLLHFIRTKSGSMH). Residues 18–38 (WWLQRFLAILLAPIILYLLFD) form a helical membrane-spanning segment. At 39–63 (VAIYIGQQSDPTVMMFLNRIFNHNS) the chain is on the mitochondrial intermembrane side. The chain crosses the membrane as a helical span at residues 64-85 (IFIFITSVILIWHVRGGMEVII). Residue His-76 participates in heme binding. Residues 86–95 (EDYVHGEKTR) are Mitochondrial matrix-facing. Tyr-88 lines the a ubiquinone pocket. A helical membrane pass occupies residues 96 to 120 (IVSIFLIRVIAIEIMEYLYKCSIIF).

As to quaternary structure, part of an enzyme complex containing four subunits: a flavoprotein, an iron-sulfur protein, plus two membrane-anchoring proteins. Heme is required as a cofactor.

Its subcellular location is the mitochondrion inner membrane. It functions in the pathway carbohydrate metabolism; tricarboxylic acid cycle. Membrane-anchoring subunit of succinate dehydrogenase (SDH). The protein is Succinate dehydrogenase membrane anchor subunit (SDH4) of Reclinomonas americana.